Consider the following 106-residue polypeptide: ATP-dependent Clp protease adapter protein ClpS (106 aa).

This sequence belongs to the ClpS family. Binds to the N-terminal domain of the chaperone ClpA.

Involved in the modulation of the specificity of the ClpAP-mediated ATP-dependent protein degradation. This Salmonella agona (strain SL483) protein is ATP-dependent Clp protease adapter protein ClpS.